We begin with the raw amino-acid sequence, 340 residues long: Holliday junction branch migration complex subunit RuvB (340 aa).

The segment at 1–183 (MKRDDLVSPE…FGISFRLDYY (183 aa)) is large ATPase domain (RuvB-L). Residues leucine 22, arginine 23, glycine 64, lysine 67, threonine 68, threonine 69, 130–132 (EDF), arginine 173, tyrosine 183, and arginine 220 contribute to the ATP site. Threonine 68 contributes to the Mg(2+) binding site. The small ATPAse domain (RuvB-S) stretch occupies residues 184 to 254 (AVEELTKIIN…VAVHALEMLE (71 aa)). Positions 257–340 (DRGFDQMDRS…KFEVGQKELF (84 aa)) are head domain (RuvB-H). Residues lysine 312 and arginine 317 each contribute to the DNA site.

This sequence belongs to the RuvB family. In terms of assembly, homohexamer. Forms an RuvA(8)-RuvB(12)-Holliday junction (HJ) complex. HJ DNA is sandwiched between 2 RuvA tetramers; dsDNA enters through RuvA and exits via RuvB. An RuvB hexamer assembles on each DNA strand where it exits the tetramer. Each RuvB hexamer is contacted by two RuvA subunits (via domain III) on 2 adjacent RuvB subunits; this complex drives branch migration. In the full resolvosome a probable DNA-RuvA(4)-RuvB(12)-RuvC(2) complex forms which resolves the HJ.

The protein localises to the cytoplasm. The catalysed reaction is ATP + H2O = ADP + phosphate + H(+). In terms of biological role, the RuvA-RuvB-RuvC complex processes Holliday junction (HJ) DNA during genetic recombination and DNA repair, while the RuvA-RuvB complex plays an important role in the rescue of blocked DNA replication forks via replication fork reversal (RFR). RuvA specifically binds to HJ cruciform DNA, conferring on it an open structure. The RuvB hexamer acts as an ATP-dependent pump, pulling dsDNA into and through the RuvAB complex. RuvB forms 2 homohexamers on either side of HJ DNA bound by 1 or 2 RuvA tetramers; 4 subunits per hexamer contact DNA at a time. Coordinated motions by a converter formed by DNA-disengaged RuvB subunits stimulates ATP hydrolysis and nucleotide exchange. Immobilization of the converter enables RuvB to convert the ATP-contained energy into a lever motion, pulling 2 nucleotides of DNA out of the RuvA tetramer per ATP hydrolyzed, thus driving DNA branch migration. The RuvB motors rotate together with the DNA substrate, which together with the progressing nucleotide cycle form the mechanistic basis for DNA recombination by continuous HJ branch migration. Branch migration allows RuvC to scan DNA until it finds its consensus sequence, where it cleaves and resolves cruciform DNA. The protein is Holliday junction branch migration complex subunit RuvB of Syntrophus aciditrophicus (strain SB).